Reading from the N-terminus, the 597-residue chain is MGKGTDKLYITHSEWSSSDAYGASTGANAGARAQRRGASFKKLPFNFCAASLQPFKNPVCTPDGTIFDVEVIGSWLEKHKTNPVTGEPLSAKDLIKLNFARNGDTTDSDENKGDLIDPVTFKVFTDNTHIVAIRHGSYANVFAWETVERMNIKPKMWRDLVDDEEFGRRDIITLQDPQNVSASRDLSQFKYLQDGQDAILTKEQEEERKGGTVNIEALGRVGEKVLRAKEAVERARAARQAGGADVNRLTQALTTTSTNSATNNNKTAIARGQSLIQERKRPANAATYTTGLTAASFTSTGLTPSTSGSLALLSDEQYLLKPSHRIKNKGYVRMETNLGPLTLELLPEFAPKAVWNFLRLSEKGYYRDVAFHRSIRNFMIQGGDPSGTGRGGSSIWGKNFEDEFEGPNTHSARGIVSMANKGKNTNSSQFFITYRPASHLDRKHTIFAKVIEGQDTTLTAMENVATDGSDRPLNKIVIKDMIILIDPFAEWMKEKKQKEGEEERKREVARQGGTEDDRTTWTGKRIRADGTMEGQGMGEGGGGGPKVGKYLDVGAVKKAATTTTTTTRKAEEEEVDTWEEPVRKKAKMGGFGNFDGW.

Positions 41 to 114 (KKLPFNFCAA…TTDSDENKGD (74 aa)) constitute a U-box domain. The PPIase cyclophilin-type domain maps to 328–483 (NKGYVRMETN…NKIVIKDMII (156 aa)). Residues 495–519 (KKQKEGEEERKREVARQGGTEDDRT) are compositionally biased toward basic and acidic residues. 2 disordered regions span residues 495 to 521 (KKQKEGEEERKREVARQGGTEDDRTTW) and 560 to 597 (ATTTTTTTRKAEEEEVDTWEEPVRKKAKMGGFGNFDGW).

Belongs to the cyclophilin-type PPIase family. PPIL2 subfamily.

The protein resides in the nucleus. The enzyme catalyses [protein]-peptidylproline (omega=180) = [protein]-peptidylproline (omega=0). It catalyses the reaction S-ubiquitinyl-[E2 ubiquitin-conjugating enzyme]-L-cysteine + [acceptor protein]-L-lysine = [E2 ubiquitin-conjugating enzyme]-L-cysteine + N(6)-ubiquitinyl-[acceptor protein]-L-lysine.. It participates in protein modification; protein ubiquitination. May catalyze the cis-trans isomerization of proline imidic peptide bonds in oligopeptides thereby assisting the folding of proteins. May also function as a chaperone, playing a role in intracellular transport of proteins. May also have a protein ubiquitin ligase activity acting as an E3 ubiquitin protein ligase or as a ubiquitin-ubiquitin ligase promoting elongation of ubiquitin chains on proteins. The polypeptide is Peptidyl-prolyl cis-trans isomerase-like 2 (ppi-2) (Neurospora crassa (strain ATCC 24698 / 74-OR23-1A / CBS 708.71 / DSM 1257 / FGSC 987)).